Here is a 561-residue protein sequence, read N- to C-terminus: Foot protein 1 variant 1 (561 aa).

Positions 1-20 are cleaved as a signal peptide; it reads MARNMNILTLFAVLIGSASA. 3',4'-dihydroxyphenylalanine is present on Tyr22. Residue Pro33 is modified to 4-hydroxyproline. The stretch at 41–50 is one A-1; approximate repeat; it reads VHPPAWTAWK. The segment at 41–410 is 13 X 10 AA A-P-P-P-A-W-T-A-W-K; it reads VHPPAWTAWK…APPPAWTAWK (370 aa). A 7'-hydroxytryptophan mark is found at Trp46, Trp49, Trp56, and Trp59. 4 C-linked (Man) hydroxytryptophan glycosylation sites follow: Trp46, Trp49, Trp56, and Trp59. The stretch at 51-60 is one A-2; approximate repeat; it reads AHPPAWTAWK. One copy of the B-1 repeat lies at 61–70; that stretch reads ATPKPWTAWK. The interval 61-440 is 27 X 10 AA A-T-P-K-P-W-T-A-W-K; that stretch reads ATPKPWTAWK…ATPKPWTAWR (380 aa). Pro65 carries the 4-hydroxyproline modification. C-linked (Man) tryptophan glycosylation is present at Trp66. Trp69 bears the 7'-hydroxytryptophan mark. C-linked (Man) hydroxytryptophan glycosylation is present at Trp69. The A-3 repeat unit spans residues 71–80; the sequence is APPPAWTAWK. A 4-hydroxyproline mark is found at Pro72, Pro73, and Pro74. Residues Trp76 and Trp79 each carry the 7'-hydroxytryptophan modification. 2 C-linked (Man) hydroxytryptophan glycosylation sites follow: Trp76 and Trp79. The stretch at 81–90 is one B-2 repeat; sequence ATPKPWTAWK. Pro85 carries the 4-hydroxyproline modification. Trp86 is a glycosylation site (C-linked (Man) tryptophan). Residue Trp89 is modified to 7'-hydroxytryptophan. The C-linked (Man) hydroxytryptophan glycan is linked to Trp89. The stretch at 91-100 is one A-4; approximate repeat; it reads APPPTWTAWK. Pro92, Pro93, and Pro94 each carry 4-hydroxyproline. A 7'-hydroxytryptophan mark is found at Trp96 and Trp99. Residues Trp96 and Trp99 are each glycosylated (C-linked (Man) hydroxytryptophan). The stretch at 101–110 is one B-3 repeat; that stretch reads ATPKPWTAWK. Pro105 carries the post-translational modification 4-hydroxyproline. C-linked (Man) tryptophan glycosylation occurs at Trp106. Trp109 bears the 7'-hydroxytryptophan mark. The C-linked (Man) hydroxytryptophan glycan is linked to Trp109. An A-5 repeat occupies 111 to 120; that stretch reads APPPAWTAWK. 4-hydroxyproline is present on residues Pro112, Pro113, and Pro114. A 7'-hydroxytryptophan mark is found at Trp116 and Trp119. 2 C-linked (Man) hydroxytryptophan glycosylation sites follow: Trp116 and Trp119. The B-4; approximate repeat unit spans residues 121-130; sequence ATLKPWTAWK. At Pro125 the chain carries 4-hydroxyproline. Trp126 carries a C-linked (Man) tryptophan glycan. At Trp129 the chain carries 7'-hydroxytryptophan. A C-linked (Man) hydroxytryptophan glycan is attached at Trp129. The B-5 repeat unit spans residues 131–140; that stretch reads ATPKPWTAWK. Pro135 carries the post-translational modification 4-hydroxyproline. Trp136 is a glycosylation site (C-linked (Man) tryptophan). Trp139 bears the 7'-hydroxytryptophan mark. Trp139 is a glycosylation site (C-linked (Man) hydroxytryptophan). The stretch at 141 to 150 is one B-6 repeat; the sequence is ATPKPWTAWK. 4-hydroxyproline is present on Pro145. Trp146 is a glycosylation site (C-linked (Man) tryptophan). A 7'-hydroxytryptophan modification is found at Trp149. Trp149 carries C-linked (Man) hydroxytryptophan glycosylation. The B-7 repeat unit spans residues 151–160; it reads ATPKPWTAWK. 4-hydroxyproline is present on Pro155. Trp156 is a glycosylation site (C-linked (Man) tryptophan). 7'-hydroxytryptophan is present on Trp159. Trp159 carries a C-linked (Man) hydroxytryptophan glycan. A B-8 repeat occupies 161 to 170; that stretch reads ATPKPWTAWK. At Pro165 the chain carries 4-hydroxyproline. Trp166 carries C-linked (Man) tryptophan glycosylation. Trp169 is subject to 7'-hydroxytryptophan. Residue Trp169 is glycosylated (C-linked (Man) hydroxytryptophan). A B-9; approximate repeat occupies 171 to 180; sequence ATPKPWTVWK. Pro175 is subject to 4-hydroxyproline. Residue Trp176 is glycosylated (C-linked (Man) tryptophan). The residue at position 179 (Trp179) is a 7'-hydroxytryptophan. The C-linked (Man) hydroxytryptophan glycan is linked to Trp179. A B-10 repeat occupies 181–190; that stretch reads ATPKPWTAWK. Position 185 is a 4-hydroxyproline (Pro185). C-linked (Man) tryptophan glycosylation is present at Trp186. Trp189 is subject to 7'-hydroxytryptophan. Trp189 is a glycosylation site (C-linked (Man) hydroxytryptophan). Residues 191–200 form a B-11 repeat; that stretch reads ATPKPWTAWK. Position 195 is a 4-hydroxyproline (Pro195). Trp196 carries a C-linked (Man) tryptophan glycan. Trp199 is subject to 7'-hydroxytryptophan. Trp199 carries C-linked (Man) hydroxytryptophan glycosylation. An A-6; approximate repeat occupies 201–210; the sequence is APPPAWSAWK. A 4-hydroxyproline mark is found at Pro202, Pro203, and Pro204. 7'-hydroxytryptophan is present on residues Trp206 and Trp209. 2 C-linked (Man) hydroxytryptophan glycosylation sites follow: Trp206 and Trp209. The B-12; approximate repeat unit spans residues 211–220; it reads ATPKPWTVWK. A 4-hydroxyproline modification is found at Pro215. C-linked (Man) tryptophan glycosylation occurs at Trp216. Trp219 is subject to 7'-hydroxytryptophan. C-linked (Man) hydroxytryptophan glycosylation is present at Trp219. The B-13 repeat unit spans residues 221–230; it reads ATPKPWTAWK. Pro225 carries the post-translational modification 4-hydroxyproline. Trp226 is a glycosylation site (C-linked (Man) tryptophan). Trp229 is subject to 7'-hydroxytryptophan. C-linked (Man) hydroxytryptophan glycosylation is present at Trp229. A B-14 repeat occupies 231–240; the sequence is ATPKPWTAWK. Pro235 carries the post-translational modification 4-hydroxyproline. C-linked (Man) tryptophan glycosylation occurs at Trp236. Trp239 is subject to 7'-hydroxytryptophan. Residue Trp239 is glycosylated (C-linked (Man) hydroxytryptophan). The B-15; approximate repeat unit spans residues 241–250; sequence ATPKPWTVWK. Position 245 is a 4-hydroxyproline (Pro245). Residue Trp246 is glycosylated (C-linked (Man) tryptophan). At Trp249 the chain carries 7'-hydroxytryptophan. Trp249 carries C-linked (Man) hydroxytryptophan glycosylation. One copy of the B-16 repeat lies at 251-260; the sequence is ATPKPWTAWK. Pro255 carries the 4-hydroxyproline modification. C-linked (Man) tryptophan glycosylation is present at Trp256. Trp259 bears the 7'-hydroxytryptophan mark. C-linked (Man) hydroxytryptophan glycosylation occurs at Trp259. The A-7 repeat unit spans residues 261-270; the sequence is APPPAWTAWK. Residues Pro262, Pro263, and Pro264 each carry the 4-hydroxyproline modification. 7'-hydroxytryptophan is present on residues Trp266 and Trp269. C-linked (Man) hydroxytryptophan glycosylation is found at Trp266 and Trp269. The B-17 repeat unit spans residues 271–280; it reads ATPKPWTAWK. Pro275 bears the 4-hydroxyproline mark. C-linked (Man) tryptophan glycosylation occurs at Trp276. Trp279 carries the post-translational modification 7'-hydroxytryptophan. Trp279 carries C-linked (Man) hydroxytryptophan glycosylation. An A-8; approximate repeat occupies 281–290; the sequence is APPPTWTAWK. 4-hydroxyproline is present on residues Pro282, Pro283, and Pro284. Trp286 and Trp289 each carry 7'-hydroxytryptophan. C-linked (Man) hydroxytryptophan glycans are attached at residues Trp286 and Trp289. Residues 291 to 300 form a B-18 repeat; sequence ATPKPWTAWK. Pro295 bears the 4-hydroxyproline mark. Trp296 is a glycosylation site (C-linked (Man) tryptophan). Trp299 carries the 7'-hydroxytryptophan modification. C-linked (Man) hydroxytryptophan glycosylation is present at Trp299. Residues 301–310 form an A-9; approximate repeat; the sequence is APPPAWSAWK. 4-hydroxyproline occurs at positions 302, 303, and 304. Trp306 and Trp309 each carry 7'-hydroxytryptophan. C-linked (Man) hydroxytryptophan glycosylation is found at Trp306 and Trp309. One copy of the B-19 repeat lies at 311–320; the sequence is ATPKPWTAWK. Pro315 is modified (4-hydroxyproline). Residue Trp316 is glycosylated (C-linked (Man) tryptophan). Position 319 is a 7'-hydroxytryptophan (Trp319). Trp319 carries C-linked (Man) hydroxytryptophan glycosylation. The B-20 repeat unit spans residues 321-330; the sequence is ATPKPWTAWK. Pro325 carries the 4-hydroxyproline modification. C-linked (Man) tryptophan glycosylation is present at Trp326. At Trp329 the chain carries 7'-hydroxytryptophan. Residue Trp329 is glycosylated (C-linked (Man) hydroxytryptophan). One copy of the B-21 repeat lies at 331–340; that stretch reads ATPKPWTAWK. 4-hydroxyproline is present on Pro335. A C-linked (Man) tryptophan glycan is attached at Trp336. Trp339 carries the post-translational modification 7'-hydroxytryptophan. Trp339 carries a C-linked (Man) hydroxytryptophan glycan. The B-22 repeat unit spans residues 341–350; the sequence is ATPKPWTAWK. Pro345 carries the post-translational modification 4-hydroxyproline. A C-linked (Man) tryptophan glycan is attached at Trp346. Position 349 is a 7'-hydroxytryptophan (Trp349). Residue Trp349 is glycosylated (C-linked (Man) hydroxytryptophan). An A-10; approximate repeat occupies 351 to 360; it reads VPPPAWTAWK. Pro352, Pro353, and Pro354 each carry 4-hydroxyproline. Trp356, Trp359, Trp366, and Trp369 each carry 7'-hydroxytryptophan. C-linked (Man) hydroxytryptophan glycosylation is found at Trp356, Trp359, Trp366, and Trp369. An A-11; approximate repeat occupies 361–370; sequence AHPPAWTAWK. Residues 371–380 form a B-23 repeat; that stretch reads ATPKPWTAWK. Pro375 carries the 4-hydroxyproline modification. Residue Trp376 is glycosylated (C-linked (Man) tryptophan). Residue Trp379 is modified to 7'-hydroxytryptophan. C-linked (Man) hydroxytryptophan glycosylation is present at Trp379. The A-12 repeat unit spans residues 381-390; sequence APPPAWTAWK. A 4-hydroxyproline mark is found at Pro382, Pro383, and Pro384. Residues Trp386 and Trp389 each carry the 7'-hydroxytryptophan modification. Trp386 and Trp389 each carry a C-linked (Man) hydroxytryptophan glycan. The stretch at 391–400 is one B-24 repeat; sequence ATPKPWTAWK. The residue at position 395 (Pro395) is a 4-hydroxyproline. A C-linked (Man) tryptophan glycan is attached at Trp396. The residue at position 399 (Trp399) is a 7'-hydroxytryptophan. C-linked (Man) hydroxytryptophan glycosylation is present at Trp399. An A-13 repeat occupies 401-410; sequence APPPAWTAWK. Residues Pro402, Pro403, and Pro404 each carry the 4-hydroxyproline modification. Residues Trp406 and Trp409 each carry the 7'-hydroxytryptophan modification. Residues Trp406 and Trp409 are each glycosylated (C-linked (Man) hydroxytryptophan). A B-25 repeat occupies 411-420; that stretch reads ATPKPWTAWK. Position 415 is a 4-hydroxyproline (Pro415). The C-linked (Man) tryptophan glycan is linked to Trp416. Trp419 is subject to 7'-hydroxytryptophan. A glycan (C-linked (Man) hydroxytryptophan) is linked at Trp419. One copy of the B-26; approximate repeat lies at 421–430; that stretch reads ATPKPWTVWK. The residue at position 425 (Pro425) is a 4-hydroxyproline. Trp426 carries C-linked (Man) tryptophan glycosylation. The residue at position 429 (Trp429) is a 7'-hydroxytryptophan. Trp429 is a glycosylation site (C-linked (Man) hydroxytryptophan). A B-27; approximate repeat occupies 431 to 440; the sequence is ATPKPWTAWR. Pro435 carries the 4-hydroxyproline modification. Trp436 carries a C-linked (Man) tryptophan glycan. Trp439 carries the post-translational modification 7'-hydroxytryptophan. C-linked (Man) hydroxytryptophan glycosylation is present at Trp439. The disordered stretch occupies residues 452-507; the sequence is GHGYGGYGKPGKPGKPGSKGPRGPAGPPGATGKTGRTGATGKRGPPGYPGKPGVPG. The segment covering 453-462 has biased composition (gly residues); that stretch reads HGYGGYGKPG. Residues 459–510 form the Collagen-like domain; sequence GKPGKPGKPGSKGPRGPAGPPGATGKTGRTGATGKRGPPGYPGKPGVPGRNG. Positions 466-496 are enriched in low complexity; sequence KPGSKGPRGPAGPPGATGKTGRTGATGKRGP. Residues Pro497, Pro500, and Pro506 each carry the 4-hydroxyproline modification.

As to expression, produced by the byssal gland.

The protein resides in the secreted. Provides adhesiveness to the mussel's foot. Mussels produce one of the strongest water insoluble glues. The mussel's adhesive is a bundle of threads, called a byssus, formed by a fibrous collagenous core coated with adhesive proteins. This chain is Foot protein 1 variant 1, found in Perna viridis (Asian green mussel).